A 246-amino-acid polypeptide reads, in one-letter code: 5-oxoprolinase subunit A (246 aa).

The protein belongs to the LamB/PxpA family. As to quaternary structure, forms a complex composed of PxpA, PxpB and PxpC.

The enzyme catalyses 5-oxo-L-proline + ATP + 2 H2O = L-glutamate + ADP + phosphate + H(+). Catalyzes the cleavage of 5-oxoproline to form L-glutamate coupled to the hydrolysis of ATP to ADP and inorganic phosphate. This is 5-oxoprolinase subunit A from Cupriavidus pinatubonensis (strain JMP 134 / LMG 1197) (Cupriavidus necator (strain JMP 134)).